Consider the following 706-residue polypeptide: Probable rhamnogalacturonate lyase B (706 aa).

The signal sequence occupies residues 1–19 (MRLLHPLIPASLLLTLTSA). Residues N27, N40, N143, N239, N285, N380, N495, N569, N597, and N638 are each glycosylated (N-linked (GlcNAc...) asparagine).

Belongs to the polysaccharide lyase 4 family.

It localises to the secreted. It catalyses the reaction Endotype eliminative cleavage of L-alpha-rhamnopyranosyl-(1-&gt;4)-alpha-D-galactopyranosyluronic acid bonds of rhamnogalacturonan I domains in ramified hairy regions of pectin leaving L-rhamnopyranose at the reducing end and 4-deoxy-4,5-unsaturated D-galactopyranosyluronic acid at the non-reducing end.. Pectinolytic enzymes consist of four classes of enzymes: pectin lyase, polygalacturonase, pectin methylesterase and rhamnogalacturonase. Degrades the rhamnogalacturonan I (RG-I) backbone of pectin. The sequence is that of Probable rhamnogalacturonate lyase B (rglB) from Aspergillus niger (strain ATCC MYA-4892 / CBS 513.88 / FGSC A1513).